The sequence spans 486 residues: Cysteine--tRNA ligase (486 aa).

A Zn(2+)-binding site is contributed by Cys29. A 'HIGH' region motif is present at residues Val31–His41. Zn(2+) is bound by residues Cys214, His239, and Glu243. The 'KMSKS' region signature appears at Lys271–Ser275. Lys274 serves as a coordination point for ATP.

Belongs to the class-I aminoacyl-tRNA synthetase family. Monomer. Requires Zn(2+) as cofactor.

The protein localises to the cytoplasm. The catalysed reaction is tRNA(Cys) + L-cysteine + ATP = L-cysteinyl-tRNA(Cys) + AMP + diphosphate. The chain is Cysteine--tRNA ligase from Trichormus variabilis (strain ATCC 29413 / PCC 7937) (Anabaena variabilis).